The following is a 399-amino-acid chain: Mitochondrial glycine transporter (399 aa).

Solcar repeat units lie at residues 35–137 (IPPY…LRSV), 164–251 (LSTT…CKTN), and 266–374 (GNWM…GRSW). Helical transmembrane passes span 41–66 (LAFG…TRLQ), 112–138 (GTAP…RSVA), 170–195 (LLTG…ARFE), 226–249 (GFTA…EACK), 270–296 (VVSA…KTRM), and 349–367 (GLGL…GWSI). The interval 379-399 (EASSSAQEAGTGTRLLDHKQV) is disordered.

It belongs to the mitochondrial carrier (TC 2.A.29) family. SLC25A38 subfamily.

It localises to the mitochondrion inner membrane. It carries out the reaction glycine(in) = glycine(out). In terms of biological role, mitochondrial glycine transporter that imports glycine into the mitochondrial matrix. Plays an important role in providing glycine for the first enzymatic step in heme biosynthesis, the condensation of glycine with succinyl-CoA to produce 5-aminolevulinate (ALA) in the mitochondrial matrix. This chain is Mitochondrial glycine transporter, found in Mycosarcoma maydis (Corn smut fungus).